A 306-amino-acid polypeptide reads, in one-letter code: Small ribosomal subunit protein uS2 (306 aa).

At serine 2 the chain carries N-acetylserine. Laminin-binding stretches follow at residues 161-180 (IPCN…MLAR) and 205-229 (RDPE…EFQG). 5 [DE]-W-[ST] repeats span residues 230–232 (EWT), 245–247 (DWS), 276–278 (DWS), 286–288 (DWS), and 304–306 (EWS). Residues 242-306 (EVADWSEGVQ…EWTGTTTEWS (65 aa)) are laminin-binding. Residues 247 to 306 (SEGVQVPSVPIQQFTAERTDVPPAPKPTEDWSTQPASTDDWSAAPTAQASEWTGTTTEWS) are disordered. The span at 276 to 306 (DWSTQPASTDDWSAAPTAQASEWTGTTTEWS) shows a compositional bias: polar residues.

This sequence belongs to the universal ribosomal protein uS2 family. Monomer (37LRP) and homodimer (67LR). Component of the small ribosomal subunit. Mature ribosomes consist of a small (40S) and a large (60S) subunit. The 40S subunit contains about 33 different proteins and 1 molecule of RNA (18S). The 60S subunit contains about 49 different proteins and 3 molecules of RNA (28S, 5.8S and 5S). Interacts with rps21. Interacts with several laminins including at least lamb1. Interacts with mdk. Acylated. Acylation may be a prerequisite for conversion of the monomeric 37 kDa laminin receptor precursor (37LRP) to the mature dimeric 67 kDa laminin receptor (67LR), and may provide a mechanism for membrane association. In terms of processing, cleaved by stromelysin-3 (ST3) at the cell surface. Cleavage by stromelysin-3 may be a mechanism to alter cell-extracellular matrix interactions.

It localises to the cell membrane. The protein resides in the cytoplasm. The protein localises to the nucleus. Its function is as follows. Required for the assembly and/or stability of the 40S ribosomal subunit. Required for the processing of the 20S rRNA-precursor to mature 18S rRNA in a late step of the maturation of 40S ribosomal subunits. Also functions as a cell surface receptor for laminin. Plays a role in cell adhesion to the basement membrane and in the consequent activation of signaling transduction pathways. May play a role in cell fate determination and tissue morphogenesis. This Xenopus laevis (African clawed frog) protein is Small ribosomal subunit protein uS2 (rpsa).